The sequence spans 471 residues: Amidophosphoribosyltransferase (471 aa).

The Nucleophile role is filled by C2. The Glutamine amidotransferase type-2 domain maps to 2 to 224; the sequence is CGIFGIYSYE…PGEIIEIKDG (223 aa). [4Fe-4S] cluster is bound at residue C255. Positions 302, 364, and 365 each coordinate Mg(2+). Residues C401, C450, and C453 each coordinate [4Fe-4S] cluster.

This sequence in the C-terminal section; belongs to the purine/pyrimidine phosphoribosyltransferase family. It depends on Mg(2+) as a cofactor. [4Fe-4S] cluster is required as a cofactor.

The catalysed reaction is 5-phospho-beta-D-ribosylamine + L-glutamate + diphosphate = 5-phospho-alpha-D-ribose 1-diphosphate + L-glutamine + H2O. It functions in the pathway purine metabolism; IMP biosynthesis via de novo pathway; N(1)-(5-phospho-D-ribosyl)glycinamide from 5-phospho-alpha-D-ribose 1-diphosphate: step 1/2. In terms of biological role, catalyzes the formation of phosphoribosylamine from phosphoribosylpyrophosphate (PRPP) and glutamine. The sequence is that of Amidophosphoribosyltransferase from Methanocaldococcus jannaschii (strain ATCC 43067 / DSM 2661 / JAL-1 / JCM 10045 / NBRC 100440) (Methanococcus jannaschii).